A 119-amino-acid chain; its full sequence is Large ribosomal subunit protein bL20 (119 aa).

It belongs to the bacterial ribosomal protein bL20 family.

Its function is as follows. Binds directly to 23S ribosomal RNA and is necessary for the in vitro assembly process of the 50S ribosomal subunit. It is not involved in the protein synthesizing functions of that subunit. The protein is Large ribosomal subunit protein bL20 of Alkaliphilus oremlandii (strain OhILAs) (Clostridium oremlandii (strain OhILAs)).